The primary structure comprises 468 residues: 3-isopropylmalate dehydratase large subunit (468 aa).

The [4Fe-4S] cluster site is built by Cys347, Cys407, and Cys410.

The protein belongs to the aconitase/IPM isomerase family. LeuC type 1 subfamily. Heterodimer of LeuC and LeuD. [4Fe-4S] cluster is required as a cofactor.

It carries out the reaction (2R,3S)-3-isopropylmalate = (2S)-2-isopropylmalate. Its pathway is amino-acid biosynthesis; L-leucine biosynthesis; L-leucine from 3-methyl-2-oxobutanoate: step 2/4. Its function is as follows. Catalyzes the isomerization between 2-isopropylmalate and 3-isopropylmalate, via the formation of 2-isopropylmaleate. This Campylobacter jejuni subsp. jejuni serotype O:23/36 (strain 81-176) protein is 3-isopropylmalate dehydratase large subunit.